We begin with the raw amino-acid sequence, 243 residues long: NEDD4-binding protein 2-like 1 (243 aa).

The disordered stretch occupies residues 1-38 (MEDSFLQSFGRLSLQPQQQQQRQRPPRPPPRGTPPRRH).

As to quaternary structure, interacts with dynactin subunit proteins, including DCTN4, DCTN5 and DCTN5.

In terms of biological role, might play a role in adipocyte differentiation and triglyceride accumulation. This chain is NEDD4-binding protein 2-like 1 (N4BP2L1), found in Homo sapiens (Human).